The chain runs to 282 residues: Pantothenate synthetase (282 aa).

31-38 provides a ligand contact to ATP; sequence MGALHDGH. The active-site Proton donor is the histidine 38. Position 62 (glutamine 62) interacts with (R)-pantoate. Beta-alanine is bound at residue glutamine 62. ATP is bound at residue 148-151; the sequence is GKKD. Glutamine 154 is a (R)-pantoate binding site. ATP is bound by residues valine 177 and 185–188; that span reads KSSR.

This sequence belongs to the pantothenate synthetase family. As to quaternary structure, homodimer.

The protein localises to the cytoplasm. It catalyses the reaction (R)-pantoate + beta-alanine + ATP = (R)-pantothenate + AMP + diphosphate + H(+). It functions in the pathway cofactor biosynthesis; (R)-pantothenate biosynthesis; (R)-pantothenate from (R)-pantoate and beta-alanine: step 1/1. Catalyzes the condensation of pantoate with beta-alanine in an ATP-dependent reaction via a pantoyl-adenylate intermediate. The chain is Pantothenate synthetase from Staphylococcus saprophyticus subsp. saprophyticus (strain ATCC 15305 / DSM 20229 / NCIMB 8711 / NCTC 7292 / S-41).